The primary structure comprises 60 residues: MLKWAIILAIVALIAGALGFSGLAGAAAGVAKILFFLFLVGFVLVLLLGGTVFKAATGPK.

A run of 2 helical transmembrane segments spans residues 4 to 24 (WAIILAIVALIAGALGFSGLA) and 33 to 53 (ILFFLFLVGFVLVLLLGGTVF).

It belongs to the UPF0391 family.

The protein localises to the cell membrane. The polypeptide is UPF0391 membrane protein CCNA_00709 (Caulobacter vibrioides (strain NA1000 / CB15N) (Caulobacter crescentus)).